A 50-amino-acid chain; its full sequence is Protein PsbN (50 aa).

The chain crosses the membrane as a helical span at residues 14 to 34; the sequence is IAVTILALLLALTGFGLWTAF.

The protein belongs to the PsbN family.

Its subcellular location is the cellular thylakoid membrane. May play a role in photosystem I and II biogenesis. The chain is Protein PsbN from Prochlorococcus marinus (strain MIT 9301).